Consider the following 204-residue polypeptide: MTKVKICGITTLEDALMAVEAGADALGFVFFEKSPRYIGPEAAARIIRELPPFVQVVGLFVDAELDFVNRTADTCGLDLVQLHGEESPAYCGLVRRRVMKAFRVRGPESLAALPDYKVSAYLLDAYSPASHGGTGERFDWEHAVAAKGEGRIVLAGGLDPDNVAQAVAKVAPYAVDVSSGVELSPGRKDREKVRRFVAEAKKLS.

The protein belongs to the TrpF family.

The catalysed reaction is N-(5-phospho-beta-D-ribosyl)anthranilate = 1-(2-carboxyphenylamino)-1-deoxy-D-ribulose 5-phosphate. Its pathway is amino-acid biosynthesis; L-tryptophan biosynthesis; L-tryptophan from chorismate: step 3/5. The protein is N-(5'-phosphoribosyl)anthranilate isomerase of Geobacter sp. (strain M21).